Here is a 473-residue protein sequence, read N- to C-terminus: Photosystem II CP43 reaction center protein (473 aa).

Residues 1–14 constitute a propeptide that is removed on maturation; sequence MKTLYSLRRFYHVE. An N-acetylthreonine modification is found at Thr15. Thr15 carries the phosphothreonine modification. 5 helical membrane passes run 69–93, 134–155, 178–200, 255–275, and 291–312; these read LFEV…PHLA, LIGP…RDKN, KAIY…RIID, KPFA…LSYS, and WYNN…ASQS. Glu367 is a [CaMn4O5] cluster binding site. A helical membrane pass occupies residues 447–471; it reads RARAAAAGFEKGINRENEPVLTLRP.

Belongs to the PsbB/PsbC family. PsbC subfamily. As to quaternary structure, PSII is composed of 1 copy each of membrane proteins PsbA, PsbB, PsbC, PsbD, PsbE, PsbF, PsbH, PsbI, PsbJ, PsbK, PsbL, PsbM, PsbT, PsbX, PsbY, PsbZ, Psb30/Ycf12, at least 3 peripheral proteins of the oxygen-evolving complex and a large number of cofactors. It forms dimeric complexes. It depends on Binds multiple chlorophylls and provides some of the ligands for the Ca-4Mn-5O cluster of the oxygen-evolving complex. It may also provide a ligand for a Cl- that is required for oxygen evolution. PSII binds additional chlorophylls, carotenoids and specific lipids. as a cofactor.

Its subcellular location is the plastid. It is found in the chloroplast thylakoid membrane. One of the components of the core complex of photosystem II (PSII). It binds chlorophyll and helps catalyze the primary light-induced photochemical processes of PSII. PSII is a light-driven water:plastoquinone oxidoreductase, using light energy to abstract electrons from H(2)O, generating O(2) and a proton gradient subsequently used for ATP formation. This Guillardia theta (Cryptophyte) protein is Photosystem II CP43 reaction center protein.